Reading from the N-terminus, the 506-residue chain is Glutamate--tRNA ligase (506 aa).

Residues 24–34 (PSPTGLQHIGG) carry the 'HIGH' region motif. Zn(2+)-binding residues include Cys-121, Cys-123, Cys-148, and His-150. The short motif at 266–270 (KLSKR) is the 'KMSKS' region element. Lys-269 contributes to the ATP binding site.

The protein belongs to the class-I aminoacyl-tRNA synthetase family. Glutamate--tRNA ligase type 1 subfamily. Monomer. The cofactor is Zn(2+).

It is found in the cytoplasm. It carries out the reaction tRNA(Glu) + L-glutamate + ATP = L-glutamyl-tRNA(Glu) + AMP + diphosphate. In terms of biological role, catalyzes the attachment of glutamate to tRNA(Glu) in a two-step reaction: glutamate is first activated by ATP to form Glu-AMP and then transferred to the acceptor end of tRNA(Glu). The sequence is that of Glutamate--tRNA ligase from Borrelia duttonii (strain Ly).